The following is a 413-amino-acid chain: DNA primase large subunit PriL (413 aa).

Cysteine 230, cysteine 301, cysteine 310, and cysteine 317 together coordinate [4Fe-4S] cluster. 3 stretches are compositionally biased toward basic and acidic residues: residues 340–356 (MEKEKEEKEEKEKQEEK), 362–381 (KEKQEEIKKKKKKEKQEEKG), and 388–413 (KKRERKQEKETKRREGKEKQEEKKRI). Positions 340–413 (MEKEKEEKEE…KEKQEEKKRI (74 aa)) are disordered.

Belongs to the eukaryotic-type primase large subunit family. In terms of assembly, heterodimer of a small subunit (PriS) and a large subunit (PriL). Requires [4Fe-4S] cluster as cofactor.

In terms of biological role, regulatory subunit of DNA primase, an RNA polymerase that catalyzes the synthesis of short RNA molecules used as primers for DNA polymerase during DNA replication. Stabilizes and modulates the activity of the small subunit, increasing the rate of DNA synthesis, and conferring RNA synthesis capability. The DNA polymerase activity may enable DNA primase to also catalyze primer extension after primer synthesis. May also play a role in DNA repair. This chain is DNA primase large subunit PriL, found in Methanosarcina barkeri (strain Fusaro / DSM 804).